Consider the following 440-residue polypeptide: Xylose isomerase (440 aa).

Catalysis depends on residues histidine 101 and aspartate 104. Residues glutamate 232, glutamate 268, histidine 271, aspartate 296, aspartate 307, aspartate 309, and aspartate 339 each coordinate Mg(2+).

It belongs to the xylose isomerase family. As to quaternary structure, homotetramer. The cofactor is Mg(2+).

It is found in the cytoplasm. It catalyses the reaction alpha-D-xylose = alpha-D-xylulofuranose. The polypeptide is Xylose isomerase (Salmonella dublin (strain CT_02021853)).